The sequence spans 469 residues: Glutamine synthetase (469 aa).

Residues 16–100 form the GS beta-grasp domain; that stretch reads EGVQYVDLRF…MICDIYDPVT (85 aa). The GS catalytic domain maps to 108 to 469; the sequence is TRYIAQKAEQ…PKEFELYWDI (362 aa). 2 residues coordinate Mg(2+): E133 and E135. Position 207 (E207) interacts with ATP. The Mg(2+) site is built by E212 and E220. Residues 264–265 and G265 contribute to the L-glutamate site; that span reads NG. Position 269 (H269) interacts with Mg(2+). ATP-binding positions include 271–273 and S273; that span reads HFS. R321, E327, and R339 together coordinate L-glutamate. ATP-binding residues include R339, R344, and K353. E358 lines the Mg(2+) pocket. R360 lines the L-glutamate pocket. Y398 is subject to O-AMP-tyrosine.

Belongs to the glutamine synthetase family. Oligomer of 12 subunits arranged in the form of two hexagons. Mg(2+) serves as cofactor.

Its subcellular location is the cytoplasm. The enzyme catalyses L-glutamate + NH4(+) + ATP = L-glutamine + ADP + phosphate + H(+). Its activity is regulated as follows. The activity of this enzyme could be controlled by adenylation under conditions of abundant glutamine. Catalyzes the ATP-dependent biosynthesis of glutamine from glutamate and ammonia. The polypeptide is Glutamine synthetase (Aquifex aeolicus (strain VF5)).